The following is a 272-amino-acid chain: Short-chain dehydrogenase srdC (272 aa).

NADP(+) contacts are provided by Ile15, Asp65, Arg127, Tyr173, Lys177, Val206, and Thr208. Catalysis depends on Tyr173, which acts as the Proton donor. The Lowers pKa of active site Tyr role is filled by Lys177.

The protein belongs to the short-chain dehydrogenases/reductases (SDR) family.

In terms of biological role, short-chain dehydrogenase; part of the gene cluster that mediates the biosynthesis of sordarial, a salicylic aldehyde structurally related to the phytotoxin pyriculol. The most interesting aspect of this pathway is formation of an aromatic product from the highly reducing polyketide synthase srdA. SrdA synthesizes a reduced polyketide chain from one molecule of acetyl-CoA and five molecules of malonyl-CoA. The polyketide chain is then reductively released as an aldehyde. The oxidoreductases srdC, srdD and srdE then oxidize one of the hydroxy groups to facilitate the intramolecular aldol condensation, followed by dehydration to yield a salicylic aldehyde. This aldehyde can undergo facile reduction by endogenous reductases to yield the alcohol 1-hydroxy-2-hydroxymethyl-3-pent-1,3-dienylbenzene. The flavin-dependent srdI counteract against the propensity of the aldehydes to be reduced under physiological conditions and is responsible for reoxidizing 1-hydroxy-2-hydroxymethyl-3-pent-1,3-dienylbenzene back to the salicylic aldehyde. This salicylic aldehyde is then selectively epoxidized by the cupin-domain-containing oxidoreductase srdB to yield the epoxide, which can be hydrolyzed stereoselectively by the hydrolase srdG to give the final product sordarial. This Neurospora crassa (strain ATCC 24698 / 74-OR23-1A / CBS 708.71 / DSM 1257 / FGSC 987) protein is Short-chain dehydrogenase srdC.